Here is a 312-residue protein sequence, read N- to C-terminus: MKREIAVGTRVSKLAMWQARWVVDRLKELCPGCSFRIVGIRTLGDRILDAALVKIGDKGLFTKELEAAMLRGEIDMAVHSMKDLPTELPEGLVIGAVCKREHPADVLVSRRGKKLDELPGGALVGTSSLRRCAQLLWYRDDLRMVNLRGNINTRLRKLEEENLDAAVLAYAGLFRMGRQDAITQVIPFDICLPAVGQGSIGVEVRSDDGEVLELVKKIDHRESRLAVFAERAFLRRLEGGCQVPVGALGTVENDRLRLEGVVATPDGKQLVRSFVEGNGGDAAAIGLRLAEKLLELGAGEILKRARQEERRE.

C241 carries the S-(dipyrrolylmethanemethyl)cysteine modification.

Belongs to the HMBS family. Monomer. The cofactor is dipyrromethane.

It catalyses the reaction 4 porphobilinogen + H2O = hydroxymethylbilane + 4 NH4(+). The protein operates within porphyrin-containing compound metabolism; protoporphyrin-IX biosynthesis; coproporphyrinogen-III from 5-aminolevulinate: step 2/4. Functionally, tetrapolymerization of the monopyrrole PBG into the hydroxymethylbilane pre-uroporphyrinogen in several discrete steps. This is Porphobilinogen deaminase from Pelotomaculum thermopropionicum (strain DSM 13744 / JCM 10971 / SI).